A 351-amino-acid chain; its full sequence is Biotin synthase (351 aa).

The Radical SAM core domain occupies 48–265; that stretch reads NKVRIHILDN…LCMFRLINPD (218 aa). [4Fe-4S] cluster is bound by residues C63, C67, and C70. [2Fe-2S] cluster is bound by residues C107, C139, C199, and R269.

This sequence belongs to the radical SAM superfamily. Biotin synthase family. In terms of assembly, homodimer. The cofactor is [4Fe-4S] cluster. [2Fe-2S] cluster is required as a cofactor.

It catalyses the reaction (4R,5S)-dethiobiotin + (sulfur carrier)-SH + 2 reduced [2Fe-2S]-[ferredoxin] + 2 S-adenosyl-L-methionine = (sulfur carrier)-H + biotin + 2 5'-deoxyadenosine + 2 L-methionine + 2 oxidized [2Fe-2S]-[ferredoxin]. It functions in the pathway cofactor biosynthesis; biotin biosynthesis; biotin from 7,8-diaminononanoate: step 2/2. Functionally, catalyzes the conversion of dethiobiotin (DTB) to biotin by the insertion of a sulfur atom into dethiobiotin via a radical-based mechanism. The chain is Biotin synthase from Leptospira interrogans serogroup Icterohaemorrhagiae serovar copenhageni (strain Fiocruz L1-130).